The following is a 145-amino-acid chain: 3-dehydroquinate dehydratase (145 aa).

Tyr22 acts as the Proton acceptor in catalysis. Substrate-binding residues include Asn71, His77, and Asp84. His97 acts as the Proton donor in catalysis. Residues 98–99 (IS) and Arg108 each bind substrate.

This sequence belongs to the type-II 3-dehydroquinase family. Homododecamer.

It carries out the reaction 3-dehydroquinate = 3-dehydroshikimate + H2O. It participates in metabolic intermediate biosynthesis; chorismate biosynthesis; chorismate from D-erythrose 4-phosphate and phosphoenolpyruvate: step 3/7. Functionally, catalyzes a trans-dehydration via an enolate intermediate. The protein is 3-dehydroquinate dehydratase of Thermotoga neapolitana (strain ATCC 49049 / DSM 4359 / NBRC 107923 / NS-E).